The sequence spans 440 residues: ATP-dependent RNA helicase sub2 (440 aa).

The span at 1–16 (MSHEEDLIDYSDEELQ) shows a compositional bias: acidic residues. The segment at 1–42 (MSHEEDLIDYSDEELQTTDAAATTAAPASNGEAKKGDLTVSG) is disordered. Residues 17–28 (TTDAAATTAAPA) are compositionally biased toward low complexity. Positions 57–85 (TGFRDFLLKEELLRAITDCGFEHPSEVQQ) match the Q motif motif. A Helicase ATP-binding domain is found at 88–263 (IPTAILNVDV…KKFMRNPLEV (176 aa)). An ATP-binding site is contributed by 101–108 (AKSGLGKT). The DEAD box signature appears at 210 to 213 (DECD). Positions 291–436 (KLNELLDSLE…EYPEGGVDSS (146 aa)) constitute a Helicase C-terminal domain.

This sequence belongs to the DEAD box helicase family. DECD subfamily.

The protein localises to the nucleus. It carries out the reaction ATP + H2O = ADP + phosphate + H(+). Its function is as follows. ATP-binding RNA helicase involved in transcription elongation and required for the export of mRNA out of the nucleus. SUB2 also plays a role in pre-mRNA splicing and spliceosome assembly. May be involved in rDNA and telomeric silencing, and maintenance of genome integrity. In Aspergillus niger (strain ATCC MYA-4892 / CBS 513.88 / FGSC A1513), this protein is ATP-dependent RNA helicase sub2 (sub2).